A 1137-amino-acid chain; its full sequence is Eukaryotic translation initiation factor 3 subunit A (1137 aa).

One can recognise a PCI domain in the interval 319-501 (LQRMAAHVLL…NSIYFGTDLT (183 aa)). 2 stretches are compositionally biased toward basic and acidic residues: residues 588 to 623 (QNNA…EERE) and 829 to 899 (AAEE…RGGD). Disordered regions lie at residues 588–631 (QNNA…QNEI) and 829–1137 (AAEE…VKRR). Phosphoserine is present on Ser-908. 4 stretches are compositionally biased toward basic and acidic residues: residues 922–971 (RGIE…EPDS), 985–1046 (SRDE…EPQR), 1054–1083 (DAPR…RGDQ), and 1106–1127 (AREE…KAAD).

Belongs to the eIF-3 subunit A family. As to quaternary structure, component of the eukaryotic translation initiation factor 3 (eIF-3) complex. The eIF-3 complex interacts with pix.

The protein localises to the cytoplasm. Its function is as follows. RNA-binding component of the eukaryotic translation initiation factor 3 (eIF-3) complex, which is involved in protein synthesis of a specialized repertoire of mRNAs and, together with other initiation factors, stimulates binding of mRNA and methionyl-tRNAi to the 40S ribosome. The eIF-3 complex specifically targets and initiates translation of a subset of mRNAs involved in cell proliferation. The sequence is that of Eukaryotic translation initiation factor 3 subunit A from Drosophila yakuba (Fruit fly).